The following is a 1697-amino-acid chain: UDP-sugar-dependent glycosyltransferase 52 (1697 aa).

Disordered regions lie at residues 20–40 and 142–166; these read HSDS…NYEN and STDL…LMIP. Residues 234-332 enclose the PH domain; sequence DYVLENYLYK…WYHEINRMQK (99 aa). Disordered regions lie at residues 573–645 and 707–756; these read FRSK…TTHE and PLDK…KQSQ. Composition is skewed to low complexity over residues 584-628 and 711-722; these read QNSQ…SSSA and QQQQQQQQQQQQ. 2 consecutive GRAM domains span residues 658 to 793 and 881 to 948; these read STFH…TKER and IKIK…KKYS. The segment covering 739 to 749 has biased composition (acidic residues); sequence TDSDTDSESDF. 4 disordered regions span residues 1011–1047, 1062–1085, 1110–1130, and 1466–1488; these read SPSI…IHST, DGEN…SNSF, SAQQ…STTT, and EHNN…SNKS. Composition is skewed to low complexity over residues 1026–1047, 1065–1084, 1112–1130, and 1469–1479; these read PPSS…IHST, NNSN…KSNS, QQQQ…STTT, and NNNNNNNNNNN. Residues 1622–1685 form an FYVE-type zinc finger; sequence SSAPNSCMGC…VCDKCFNDLQ (64 aa). Positions 1628, 1631, 1647, 1650, 1655, 1658, 1677, and 1680 each coordinate Zn(2+).

This sequence belongs to the glycosyltransferase 28 family.

The enzyme catalyses a sterol + UDP-alpha-D-glucose = a sterol 3-beta-D-glucoside + UDP + H(+). Functionally, involved in the biosynthesis of sterol glucoside. Can use different sterols such as cholesterol, sitosterol, and ergosterol as sugar acceptors. In Dictyostelium discoideum (Social amoeba), this protein is UDP-sugar-dependent glycosyltransferase 52 (ugt52).